Here is a 353-residue protein sequence, read N- to C-terminus: MTARLRPELAGLPVYVPGKTVPGAIKLASNETVFGPLPSVRAAIDRATDTVNRYPDNGCVQLKAALARHLGPDFAPEHVAVGCGSVSLCQQLVQVTASVGDEVVFGWRSFELYPPQVRVAGAIPIQVPLTDHTFDLYAMLAAVTDRTRLIFVCNPNNPTSTVVGPDALARFVEAVPAHILIAIDEAYVEYIRDGMRPDSLGLVRAHNNVVVLRTFSKAYGLAGLRIGYAIGHPDVITALDKVYVPFTVSSIGQAAAIASLDAADELLARTDTVVAERARVSAELRAAGFTLPPSQANFVWLPLGSRTQDFVEQAADARIVVRPYGTDGVRVTVAAPEENDAFLRFARRWRSDQ.

K217 is subject to N6-(pyridoxal phosphate)lysine.

Belongs to the class-II pyridoxal-phosphate-dependent aminotransferase family. In terms of assembly, homodimer. Pyridoxal 5'-phosphate serves as cofactor.

It catalyses the reaction an aromatic L-alpha-amino acid + 2-oxoglutarate = an aromatic oxo-acid + L-glutamate. Its function is as follows. Aminotransferase that catalyzes the conversion of aromatic amino acids and 2-oxoglutarate into corresponding aromatic oxo acids and L-glutamate. The sequence is that of Aromatic amino acid aminotransferase from Mycobacterium bovis (strain ATCC BAA-935 / AF2122/97).